The sequence spans 576 residues: Arginine--tRNA ligase (576 aa).

The 'HIGH' region signature appears at 128-136 (PTGPMHIGH).

The protein belongs to the class-I aminoacyl-tRNA synthetase family. As to quaternary structure, monomer.

It localises to the cytoplasm. It catalyses the reaction tRNA(Arg) + L-arginine + ATP = L-arginyl-tRNA(Arg) + AMP + diphosphate. The chain is Arginine--tRNA ligase from Rickettsia conorii (strain ATCC VR-613 / Malish 7).